The primary structure comprises 370 residues: Putative F-box protein At1g46984 (370 aa).

The F-box domain occupies 18–64 (YTQLSTLPIDLIIEILSRLPMNSIAICRLVSKQWASILQSSDFTESF).

This is Putative F-box protein At1g46984 from Arabidopsis thaliana (Mouse-ear cress).